The sequence spans 221 residues: Endo-1,4-beta-xylanase I (221 aa).

A signal peptide spans methionine 1–arginine 30. Positions glutamine 31–asparagine 219 constitute a GH11 domain. Glutamate 115 (nucleophile) is an active-site residue. Residues aspartate 126 to isoleucine 157 are disordered. The active-site Proton donor is the glutamate 206.

This sequence belongs to the glycosyl hydrolase 11 (cellulase G) family. The N-terminus is blocked.

The protein localises to the secreted. It carries out the reaction Endohydrolysis of (1-&gt;4)-beta-D-xylosidic linkages in xylans.. Its pathway is glycan degradation; xylan degradation. In terms of biological role, major xylan-degrading enzyme. Contributes to the hydrolysis of arabinoxylan, the major component of maize cell-walls. The chain is Endo-1,4-beta-xylanase I (XYL1) from Cochliobolus carbonum (Maize leaf spot fungus).